The following is a 1110-amino-acid chain: Autophagy-related protein 11 (1110 aa).

2 coiled-coil regions span residues 264 to 309 (GKVN…ELHE) and 651 to 803 (AEMF…EKDE).

It belongs to the ATG11 family. As to quaternary structure, homodimer.

The protein resides in the preautophagosomal structure membrane. The protein localises to the vacuole membrane. Its function is as follows. Involved in cytoplasm to vacuole transport (Cvt), pexophagy, mitophagy and nucleophagy. Recruits mitochondria for their selective degradation via autophagy (mitophagy) during starvation. Works as scaffold proteins that recruit ATG proteins to the pre-autophagosome (PAS), the site of vesicle/autophagosome formation. Required for the Cvt vesicles completion. Contributes through its regulation of pexophagy to survival during engulfment by host phagocytic cells during infection. Through its function in autophagy, acts as an important virulence factor that supports the viability of C.glabrata in the phagosomal compartment of infected innate immune cells. This Candida glabrata (strain ATCC 2001 / BCRC 20586 / JCM 3761 / NBRC 0622 / NRRL Y-65 / CBS 138) (Yeast) protein is Autophagy-related protein 11 (ATG11).